Consider the following 256-residue polypeptide: uncharacterized protein (256 aa).

8 residues coordinate NADP(+): I18, S37, K46, D66, Y164, K168, V197, and T199. Residue Y164 is the Proton donor of the active site. K168 serves as the catalytic Lowers pKa of active site Tyr.

It belongs to the short-chain dehydrogenases/reductases (SDR) family.

The protein resides in the cytoplasm. This is an uncharacterized protein from Saccharomyces cerevisiae (strain ATCC 204508 / S288c) (Baker's yeast).